The chain runs to 178 residues: Dual-action ribosomal maturation protein DarP (178 aa).

Belongs to the DarP family.

The protein resides in the cytoplasm. Functionally, member of a network of 50S ribosomal subunit biogenesis factors which assembles along the 30S-50S interface, preventing incorrect 23S rRNA structures from forming. Promotes peptidyl transferase center (PTC) maturation. The polypeptide is Dual-action ribosomal maturation protein DarP (Mannheimia succiniciproducens (strain KCTC 0769BP / MBEL55E)).